Consider the following 185-residue polypeptide: Translation initiation factor IF-3 (185 aa).

This sequence belongs to the IF-3 family. In terms of assembly, monomer.

It localises to the cytoplasm. In terms of biological role, IF-3 binds to the 30S ribosomal subunit and shifts the equilibrium between 70S ribosomes and their 50S and 30S subunits in favor of the free subunits, thus enhancing the availability of 30S subunits on which protein synthesis initiation begins. In Coxiella burnetii (strain RSA 493 / Nine Mile phase I), this protein is Translation initiation factor IF-3.